A 121-amino-acid chain; its full sequence is Large ribosomal subunit protein uL18 (121 aa).

Belongs to the universal ribosomal protein uL18 family. As to quaternary structure, part of the 50S ribosomal subunit; part of the 5S rRNA/L5/L18/L25 subcomplex. Contacts the 5S and 23S rRNAs.

This is one of the proteins that bind and probably mediate the attachment of the 5S RNA into the large ribosomal subunit, where it forms part of the central protuberance. The polypeptide is Large ribosomal subunit protein uL18 (Buchnera aphidicola subsp. Baizongia pistaciae (strain Bp)).